The sequence spans 378 residues: Mannitol-1-phosphate 5-dehydrogenase (378 aa).

4 to 15 (SVHFGAGNIGRG) contributes to the NAD(+) binding site.

The protein belongs to the mannitol dehydrogenase family.

It catalyses the reaction D-mannitol 1-phosphate + NAD(+) = beta-D-fructose 6-phosphate + NADH + H(+). This Streptococcus pneumoniae (strain JJA) protein is Mannitol-1-phosphate 5-dehydrogenase.